The sequence spans 266 residues: Early E1A protein (266 aa).

An interaction with RB1 in competition with E2F1 region spans residues 39–47 (MSLHEMYDL). A PXLXP motif, interaction with host ZMYND11 motif is present at residues 94-98 (PELQP). Positions 103 to 107 (LFCYE) match the LXCXE motif, interaction with host RB1 motif. Residues 160 to 180 (CSSCDYHRKTSGCPEILCSLC) fold into a zinc finger. Residues 193–244 (VSDSEPDEPDSTTADSNHGSPPTLRCTPPRDLPRPVPVKASPGKRPAVNSLH) are disordered. A compositionally biased stretch (polar residues) spans 203–212 (STTADSNHGS). Residues 255–259 (PLDLS) carry the PXDLS motif, CTBP-binding motif. A Nuclear localization signal motif is present at residues 261–265 (KRSRS).

The protein belongs to the adenoviridae E1A protein family. As to quaternary structure, interacts with host UBE2I; this interaction interferes with polySUMOylation. Interacts with host RB1; this interaction induces the aberrant dissociation of RB1-E2F1 complex thereby disrupting the activity of RB1 and activating E2F1-regulated genes. Interacts with host ATF7; the interaction enhances ATF7-mediated viral transactivation activity which requires the zinc binding domains of both proteins. Isoform early E1A 32 kDa protein and isoform early E1A 26 kDa protein interact (via N-terminus) with CUL1 and E3 ubiquitin ligase RBX1; these interactions inhibit RBX1-CUL1-dependent elongation reaction of ubiquitin chains and attenuate ubiquitination of SCF(FBXW7) target proteins. Interacts (via PXLXP motif) with host ZMYND11/BS69 (via MYND-type zinc finger); this interaction inhibits E1A mediated transactivation. Interacts with host EP300; this interaction stimulates the acetylation of RB1 by recruiting EP300 and RB1 into a multimeric-protein complex. Interacts with host CTBP1 and CTBP2; this interaction seems to potentiate viral replication. Interacts with host DCAF7. Interacts with host DYRK1A. Interacts with host KPNA4; this interaction allows E1A import into the host nucleus. Interacts with host EP400; this interaction stabilizes MYC. Interacts with host TBP protein; this interaction probably disrupts the TBP-TATA complex.

The protein resides in the host nucleus. In terms of biological role, plays a role in viral genome replication by driving entry of quiescent cells into the cell cycle. Stimulation of progression from G1 to S phase allows the virus to efficiently use the cellular DNA replicating machinery to achieve viral genome replication. E1A protein has both transforming and trans-activating activities. Induces the disassembly of the E2F1 transcription factor from RB1 by direct competition for the same binding site on RB1, with subsequent transcriptional activation of E2F1-regulated S-phase genes and of the E2 region of the adenoviral genome. Release of E2F1 leads to the ARF-mediated inhibition of MDM2 and causes TP53/p53 to accumulate because it is not targeted for degradation by MDM2-mediated ubiquitination anymore. This increase in TP53, in turn, would arrest the cell proliferation and direct its death but this effect is counteracted by the viral protein E1B-55K. Inactivation of the ability of RB1 to arrest the cell cycle is critical for cellular transformation, uncontrolled cellular growth and proliferation induced by viral infection. Interaction with RBX1 and CUL1 inhibits ubiquitination of the proteins targeted by SCF(FBXW7) ubiquitin ligase complex, and may be linked to unregulated host cell proliferation. The tumorigenesis-restraining activity of E1A may be related to the disruption of the host CtBP-CtIP complex through the CtBP binding motif. This is Early E1A protein from Simian adenovirus serotype 7 (SAdV-7).